The primary structure comprises 564 residues: CTP synthase (564 aa).

The segment at 1-272 (MARPKNVKHI…DIRVLKKLGL (272 aa)) is amidoligase domain. A CTP-binding site is contributed by Ser18. Ser18 is a binding site for UTP. Residue 19–24 (SLGKGI) participates in ATP binding. Tyr59 is an L-glutamine binding site. Asp76 serves as a coordination point for ATP. 2 residues coordinate Mg(2+): Asp76 and Glu146. CTP-binding positions include 153–155 (DIE), 193–198 (KTKPTQ), and Lys229. Residues 193–198 (KTKPTQ) and Lys229 each bind UTP. In terms of domain architecture, Glutamine amidotransferase type-1 spans 299 to 543 (TIAICGKYTE…VAAAKEFAHG (245 aa)). Gly363 is a binding site for L-glutamine. The Nucleophile; for glutamine hydrolysis role is filled by Cys390. Residues 391 to 394 (LGMQ), Glu414, and Arg471 each bind L-glutamine. Catalysis depends on residues His516 and Glu518.

The protein belongs to the CTP synthase family. As to quaternary structure, homotetramer.

The catalysed reaction is UTP + L-glutamine + ATP + H2O = CTP + L-glutamate + ADP + phosphate + 2 H(+). It catalyses the reaction L-glutamine + H2O = L-glutamate + NH4(+). The enzyme catalyses UTP + NH4(+) + ATP = CTP + ADP + phosphate + 2 H(+). It participates in pyrimidine metabolism; CTP biosynthesis via de novo pathway; CTP from UDP: step 2/2. Its activity is regulated as follows. Allosterically activated by GTP, when glutamine is the substrate; GTP has no effect on the reaction when ammonia is the substrate. The allosteric effector GTP functions by stabilizing the protein conformation that binds the tetrahedral intermediate(s) formed during glutamine hydrolysis. Inhibited by the product CTP, via allosteric rather than competitive inhibition. Catalyzes the ATP-dependent amination of UTP to CTP with either L-glutamine or ammonia as the source of nitrogen. Regulates intracellular CTP levels through interactions with the four ribonucleotide triphosphates. The protein is CTP synthase of Prosthecochloris aestuarii (strain DSM 271 / SK 413).